Here is a 67-residue protein sequence, read N- to C-terminus: ATP synthase protein 8 (67 aa).

A helical membrane pass occupies residues 8–24 (TWFITILSMLMTLFILF). Lys54 carries the post-translational modification N6-acetyllysine; alternate. Position 54 is an N6-succinyllysine; alternate (Lys54). Lys57 is modified (N6-acetyllysine).

This sequence belongs to the ATPase protein 8 family. F-type ATPases have 2 components, CF(1) - the catalytic core - and CF(0) - the membrane proton channel. Component of an ATP synthase complex composed of ATP5PB, ATP5MC1, ATP5F1E, ATP5PD, ATP5ME, ATP5PF, ATP5MF, MT-ATP6, MT-ATP8, ATP5F1A, ATP5F1B, ATP5F1D, ATP5F1C, ATP5PO, ATP5MG, ATP5MK and ATP5MJ. Interacts with PRICKLE3.

It localises to the mitochondrion membrane. Functionally, mitochondrial membrane ATP synthase (F(1)F(0) ATP synthase or Complex V) produces ATP from ADP in the presence of a proton gradient across the membrane which is generated by electron transport complexes of the respiratory chain. F-type ATPases consist of two structural domains, F(1) - containing the extramembraneous catalytic core and F(0) - containing the membrane proton channel, linked together by a central stalk and a peripheral stalk. During catalysis, ATP synthesis in the catalytic domain of F(1) is coupled via a rotary mechanism of the central stalk subunits to proton translocation. Part of the complex F(0) domain. Minor subunit located with subunit a in the membrane. This Vicugna pacos (Alpaca) protein is ATP synthase protein 8 (MT-ATP8).